We begin with the raw amino-acid sequence, 231 residues long: Small ribosomal subunit protein uS3c (231 aa).

Residues Leu-39–Arg-123 enclose the KH type-2 domain.

Belongs to the universal ribosomal protein uS3 family. As to quaternary structure, part of the 30S ribosomal subunit.

It is found in the plastid. The protein localises to the chloroplast. This is Small ribosomal subunit protein uS3c (rps3) from Chlorella vulgaris (Green alga).